Consider the following 279-residue polypeptide: Large ribosomal subunit protein uL3 (279 aa).

An N5-methylglutamine modification is found at Q151.

The protein belongs to the universal ribosomal protein uL3 family. As to quaternary structure, part of the 50S ribosomal subunit. Forms a cluster with proteins L14 and L19. Methylated by PrmB.

One of the primary rRNA binding proteins, it binds directly near the 3'-end of the 23S rRNA, where it nucleates assembly of the 50S subunit. The protein is Large ribosomal subunit protein uL3 of Dinoroseobacter shibae (strain DSM 16493 / NCIMB 14021 / DFL 12).